Reading from the N-terminus, the 181-residue chain is TATA-box-binding protein (181 aa).

2 repeat units span residues 7-83 (VVNV…VKEL) and 98-173 (VQNM…SKTL).

It belongs to the TBP family.

Functionally, general factor that plays a role in the activation of archaeal genes transcribed by RNA polymerase. Binds specifically to the TATA box promoter element which lies close to the position of transcription initiation. The polypeptide is TATA-box-binding protein (Methanococcus maripaludis (strain DSM 14266 / JCM 13030 / NBRC 101832 / S2 / LL)).